The sequence spans 414 residues: Tyrosine--tRNA ligase (414 aa).

The 'HIGH' region motif lies at 57-66 (PSAPDVHIGH). Residues 241–245 (KMSKS) carry the 'KMSKS' region motif. Residue Lys244 coordinates ATP. Positions 352 to 413 (VPLIDLLVTL…GKRKFAKLSL (62 aa)) constitute an S4 RNA-binding domain.

Belongs to the class-I aminoacyl-tRNA synthetase family. TyrS type 2 subfamily. Homodimer.

Its subcellular location is the cytoplasm. It catalyses the reaction tRNA(Tyr) + L-tyrosine + ATP = L-tyrosyl-tRNA(Tyr) + AMP + diphosphate + H(+). Functionally, catalyzes the attachment of tyrosine to tRNA(Tyr) in a two-step reaction: tyrosine is first activated by ATP to form Tyr-AMP and then transferred to the acceptor end of tRNA(Tyr). The polypeptide is Tyrosine--tRNA ligase (Shouchella clausii (strain KSM-K16) (Alkalihalobacillus clausii)).